The primary structure comprises 783 residues: uncharacterized protein (783 aa).

A DNA-binding region (zn(2)-C6 fungal-type) is located at residues 40 to 66 (CFNCKARKVRCDGANPCKACASNNLEC).

It localises to the cytoplasm. The protein resides in the nucleus. This is an uncharacterized protein from Schizosaccharomyces pombe (strain 972 / ATCC 24843) (Fission yeast).